The chain runs to 813 residues: ATP-dependent zinc metalloprotease FTSH 10, mitochondrial (813 aa).

The N-terminal 86 residues, 1–86 (MIFSKLGSSL…FANPRLRRFF (86 aa)), are a transit peptide targeting the mitochondrion. The interval 93-129 (KKNYENYYPKDSKKAPKNEQKSESRDGSKKNENENAG) is disordered. Positions 94 to 125 (KNYENYYPKDSKKAPKNEQKSESRDGSKKNEN) are enriched in basic and acidic residues. Residues 139–157 (MLIPLMAIALILSTFSLGS) traverse the membrane as a helical segment. Residue 367-374 (GPPGTGKT) coordinates ATP. Position 592 (H592) interacts with Zn(2+). Residue E593 is part of the active site. Residues H596 and D668 each contribute to the Zn(2+) site. Over residues 764 to 790 (RPFKSGETTNYDRFKSGFEESEKESQK) the composition is skewed to basic and acidic residues. Residues 764–813 (RPFKSGETTNYDRFKSGFEESEKESQKESVPVKPVEDDGIPPLEPQVVPT) are disordered.

The protein in the N-terminal section; belongs to the AAA ATPase family. This sequence in the C-terminal section; belongs to the peptidase M41 family. Zn(2+) is required as a cofactor.

The protein localises to the mitochondrion inner membrane. Its function is as follows. Probable ATP-dependent zinc metallopeptidase. Involved in the assembly and/or stability of the complexes I and V of the mitochondrial oxidative phosphorylation system. This Arabidopsis thaliana (Mouse-ear cress) protein is ATP-dependent zinc metalloprotease FTSH 10, mitochondrial (FTSH10).